The following is a 441-amino-acid chain: Serine hydroxymethyltransferase (441 aa).

124-126 (GHI) serves as a coordination point for (6S)-5,6,7,8-tetrahydrofolate. K239 is subject to N6-(pyridoxal phosphate)lysine.

The protein belongs to the SHMT family. As to quaternary structure, homodimer. It depends on pyridoxal 5'-phosphate as a cofactor.

Its subcellular location is the cytoplasm. Its pathway is amino-acid biosynthesis; glycine biosynthesis; glycine from L-serine: step 1/1. Functionally, catalyzes the reversible interconversion of serine and glycine with a modified folate serving as the one-carbon carrier. Also exhibits a pteridine-independent aldolase activity toward beta-hydroxyamino acids, producing glycine and aldehydes, via a retro-aldol mechanism. This is Serine hydroxymethyltransferase from Cenarchaeum symbiosum (strain A).